Reading from the N-terminus, the 622-residue chain is Intermediate filament protein ifc-2 (622 aa).

The interval 19–54 (SGTYASGFGQLVSGMSSAGAICTTQIRDAREREKRE) is head. The region spanning 51–399 (EKREIGLLND…ILLNGANVTT (349 aa)) is the IF rod domain. The tract at residues 55–86 (IGLLNDRLADYIEKVRFLEAQNRCLSHDIDIL) is coil 1A. Residues 87-99 (RNGFSGGGHVSGL) form a linker 1 region. Positions 100–237 (FDAEINQAKH…TENNVRIEQE (138 aa)) are coil 1B. Positions 238 to 255 (LVFIRRDTTADNRDYFRH) are linker 12. Positions 256-399 (ELQAAIRDIR…ILLNGANVTT (144 aa)) are coil 2. The interval 400-550 (YTSNTHGSGS…RVDVGGFRIE (151 aa)) is tail. An LTD domain is found at 509–622 (SGRHFHSWYL…EERAWFVYLD (114 aa)).

Belongs to the intermediate filament family. In terms of tissue distribution, expressed in intestinal cells and at desmosomes in intestine and pharynx of the larva.

The protein resides in the cytoplasm. Functionally, cytoplasmic intermediate filaments provide mechanical strength to cells. Not essential protein, although its absence leads to mild defects in locomotion. This is Intermediate filament protein ifc-2 (ifc-2) from Caenorhabditis elegans.